The chain runs to 329 residues: GDP-mannose transporter (329 aa).

Residues 1–13 (MSELKVDTGRLSH) are Cytoplasmic-facing. A helical transmembrane segment spans residues 14–34 (IANSGPMSILAYCASSILMTV). Residues 35–44 (TNKCVVGSDK) are Lumenal-facing. A helical membrane pass occupies residues 45–65 (FNMLFVMLFAQSLVCVTALVL). The Cytoplasmic segment spans residues 66–79 (LKALGYVQYRPLNK). A helical transmembrane segment spans residues 80–100 (VDVKNWLLISVLLVLMTYTSS). Topologically, residues 101 to 109 (RALKYLAVP) are lumenal. Residues 110-130 (IYTIFKNLTIILIAYGEVLFF) traverse the membrane as a helical segment. Residues 131-133 (GGR) lie on the Cytoplasmic side of the membrane. A helical transmembrane segment spans residues 134 to 154 (VTAMELSSFLLIVLSSVVATL). Residues 155–174 (GDQQALAKKPLAAAVESILG) are Lumenal-facing. Residues 175–195 (LNVGYFWMFTNCICSALFVLI) traverse the membrane as a helical segment. At 196 to 214 (MRKRIALTKFKDFDTMFYN) the chain is on the cytoplasmic side. The helical transmembrane segment at 215 to 235 (NILSLPLLMLASFMFEDWGAA) threads the bilayer. Over 236 to 245 (NIARNLTKDY) the chain is Lumenal. N-linked (GlcNAc...) asparagine glycosylation occurs at Asn-240. A helical transmembrane segment spans residues 246-266 (IIIMIISGLASVGISYCSGWC). The Cytoplasmic segment spans residues 267-273 (VRVTSST). A helical membrane pass occupies residues 274–294 (TYSMVGALNKLPIALSGLLFF). Residues 295–298 (DAPK) are Lumenal-facing. Residues 299-319 (NFLSIFSIFLGFLSGIVYAVA) traverse the membrane as a helical segment. Over 320 to 329 (KQKKQSQPAN) the chain is Cytoplasmic.

This sequence belongs to the TPT transporter family. SLC35D subfamily. In terms of assembly, homooligomer.

Its subcellular location is the golgi apparatus membrane. The protein resides in the cytoplasmic vesicle membrane. It is found in the endoplasmic reticulum membrane. Its function is as follows. Involved in the import of GDP-mannose from the cytoplasm into the Golgi lumen. The polypeptide is GDP-mannose transporter (VRG4) (Eremothecium gossypii (strain ATCC 10895 / CBS 109.51 / FGSC 9923 / NRRL Y-1056) (Yeast)).